The following is a 299-amino-acid chain: Palmitoyltransferase ZDHHC3 (299 aa).

Over 1–47 the chain is Cytoplasmic; it reads MMLIPTHHFRDIERKPEYLQPEKCAPPPFPGPVGTMWFIRDGCGIAC. Phosphotyrosine is present on Tyr18. The chain crosses the membrane as a helical span at residues 48 to 68; that stretch reads AIVTWFLVLYAEFVVLFVMLI. The Lumenal portion of the chain corresponds to 69–72; that stretch reads PSRD. The helical transmembrane segment at 73–93 threads the bilayer; the sequence is YAYSIINGIVFNLLAFLALAS. The Cytoplasmic portion of the chain corresponds to 94-171; sequence HCRAMLTDPG…NCVGENNQKY (78 aa). A DHHC domain is found at 128–254; sequence KCPKCCSIKP…DETGIEQLKK (127 aa). Residue Cys146 is the site of S-palmitoyl cysteine attachment. Cys157 serves as the catalytic S-palmitoyl cysteine intermediate. A helical membrane pass occupies residues 172-192; it reads FVLFTMYIALISLHALIMVGF. Topologically, residues 193-214 are lumenal; the sequence is HFLHCFEEDWTKCSSFSPPTTV. A helical membrane pass occupies residues 215-235; that stretch reads ILLILLCFEALLFLIFTSVMF. Residues 236–299 lie on the Cytoplasmic side of the membrane; it reads GTQVHSICTD…GKADPYQYVV (64 aa).

This sequence belongs to the DHHC palmitoyltransferase family. Monomer. Homooligomers. The monomeric form has a higher catalytic activity. Forms heterooligomers with ZDHHC7. Interacts with TNFRSF10A. Phosphorylation by FGFR1 and SRC probably regulates the palmitoyltransferase activity. In terms of processing, autopalmitoylated.

The protein resides in the golgi apparatus membrane. The enzyme catalyses L-cysteinyl-[protein] + hexadecanoyl-CoA = S-hexadecanoyl-L-cysteinyl-[protein] + CoA. It catalyses the reaction L-cysteinyl-[protein] + tetradecanoyl-CoA = S-tetradecanoyl-L-cysteinyl-[protein] + CoA. It carries out the reaction L-cysteinyl-[protein] + octadecanoyl-CoA = S-octadecanoyl-L-cysteinyl-[protein] + CoA. In terms of biological role, golgi-localized palmitoyltransferase that catalyzes the addition of palmitate onto various protein substrates. Has no stringent fatty acid selectivity and in addition to palmitate can also transfer onto target proteins myristate from tetradecanoyl-CoA and stearate from octadecanoyl-CoA. Plays an important role in G protein-coupled receptor signaling pathways involving GNAQ and potentially other heterotrimeric G proteins by regulating their dynamic association with the plasma membrane. Palmitoylates ITGA6 and ITGB4, thereby regulating the alpha-6/beta-4 integrin localization, expression and function in cell adhesion to laminin. Plays a role in the TRAIL-activated apoptotic signaling pathway most probably through the palmitoylation and localization to the plasma membrane of TNFRSF10A. In the brain, by palmitoylating the gamma subunit GABRG2 of GABA(A) receptors and regulating their postsynaptic accumulation, plays a role in synaptic GABAergic inhibitory function and GABAergic innervation. Palmitoylates the neuronal protein GAP43 which is also involved in the formation of GABAergic synapses. Palmitoylates NCDN thereby regulating its association with endosome membranes. Probably palmitoylates PRCD and is involved in its proper localization within the photoreceptor. Could mediate the palmitoylation of NCAM1 and regulate neurite outgrowth. Could palmitoylate DNAJC5 and regulate its localization to Golgi membranes. Also constitutively palmitoylates DLG4. May also palmitoylate SNAP25. Could palmitoylate the glutamate receptors GRIA1 and GRIA2 but this has not been confirmed in vivo. Could also palmitoylate the D(2) dopamine receptor DRD2. May also palmitoylate LAMTOR1, promoting its localization to lysosomal membranes. Palmitoylates the Toll-like receptor 9/TLR9 in the Golgi and thereby regulates TLR9 trafficking to endosomes. May palmitoylate CALHM1 and CALHM3 subunits of gustatory voltage-gated ion channels and modulate channel gating and kinetics. The polypeptide is Palmitoyltransferase ZDHHC3 (Rattus norvegicus (Rat)).